A 260-amino-acid chain; its full sequence is Thiazole synthase (260 aa).

Lysine 100 serves as the catalytic Schiff-base intermediate with DXP. Residues glycine 161, 187 to 188 (AG), and 209 to 210 (NT) contribute to the 1-deoxy-D-xylulose 5-phosphate site.

The protein belongs to the ThiG family. In terms of assembly, homotetramer. Forms heterodimers with either ThiH or ThiS.

It localises to the cytoplasm. The enzyme catalyses [ThiS sulfur-carrier protein]-C-terminal-Gly-aminoethanethioate + 2-iminoacetate + 1-deoxy-D-xylulose 5-phosphate = [ThiS sulfur-carrier protein]-C-terminal Gly-Gly + 2-[(2R,5Z)-2-carboxy-4-methylthiazol-5(2H)-ylidene]ethyl phosphate + 2 H2O + H(+). It participates in cofactor biosynthesis; thiamine diphosphate biosynthesis. Functionally, catalyzes the rearrangement of 1-deoxy-D-xylulose 5-phosphate (DXP) to produce the thiazole phosphate moiety of thiamine. Sulfur is provided by the thiocarboxylate moiety of the carrier protein ThiS. In vitro, sulfur can be provided by H(2)S. The protein is Thiazole synthase of Dechloromonas aromatica (strain RCB).